Consider the following 159-residue polypeptide: Methyl-coenzyme M reductase operon protein D (159 aa).

MCR is composed of three subunits: alpha, beta, and gamma. The function of proteins C and D is not known.

This is Methyl-coenzyme M reductase operon protein D (mcrD) from Methanococcus voltae.